The primary structure comprises 55 residues: uncharacterized protein (55 aa).

This is an uncharacterized protein from Rickettsia prowazekii (strain Madrid E).